The chain runs to 438 residues: L-fucose-proton symporter (438 aa).

Topologically, residues 2–26 (GNTSIQTQSYRAVDKDAGQSRSYII) are cytoplasmic. Residues 27–53 (PFALLCSLFFLWAVANNLNDILLPQFQ) form a helical membrane-spanning segment. Topologically, residues 54 to 61 (QAFTLTNF) are periplasmic. A helical membrane pass occupies residues 62-87 (QAGLIQSAFYFGYFIIPIPAGILMKK). At 88–90 (LSY) the chain is on the cytoplasmic side. Residues 91–113 (KAGIITGLFLYALGAALFWPAAE) traverse the membrane as a helical segment. Topologically, residues 114 to 117 (IMNY) are periplasmic. A helical membrane pass occupies residues 118-144 (TLFLVGLFIIAAGLGCLETAANPFVTV). The Cytoplasmic portion of the chain corresponds to 145-150 (LGPESS). Residues 151 to 178 (GHFRLNLAQTFNSFGAIIAVVFGQSLIL) traverse the membrane as a helical segment. The Periplasmic portion of the chain corresponds to 179–193 (SNVPHQSQDVLDKMS). Residues 194–227 (PEQLSAYKHSLVLSVQTPYMIIVAIVLLVALLIM) form a helical membrane-spanning segment. At 228–257 (LTKFPALQSDNHSDAKQGSFSASLSRLARI) the chain is on the cytoplasmic side. The chain crosses the membrane as a helical span at residues 258 to 287 (RHWRWAVLAQFCYVGAQTACWSYLIRYAVE). The Periplasmic portion of the chain corresponds to 288–293 (EIPGMT). A helical membrane pass occupies residues 294-319 (AGFAANYLTGTMVCFFIGRFTGTWLI). Over 320–324 (SRFAP) the chain is Cytoplasmic. The chain crosses the membrane as a helical span at residues 325–343 (HKVLAAYALIAMALCLISA). Residues 344-347 (FAGG) lie on the Periplasmic side of the membrane. A helical transmembrane segment spans residues 348-372 (HVGLIALTLCSAFMSIQYPTIFSLG). At 373 to 379 (IKNLGQD) the chain is on the cytoplasmic side. A helical membrane pass occupies residues 380 to 407 (TKYGSSFIVMTIIGGGIVTPVMGFVSDA). Residues 408-410 (AGN) lie on the Periplasmic side of the membrane. Residues 411 to 430 (IPTAELIPALCFAVIFIFAR) traverse the membrane as a helical segment. The Cytoplasmic portion of the chain corresponds to 431–438 (FRSQTATN).

The protein belongs to the major facilitator superfamily. FHS transporter (TC 2.A.1.7) family.

The protein resides in the cell inner membrane. It carries out the reaction L-fucose(in) + H(+)(in) = L-fucose(out) + H(+)(out). The enzyme catalyses D-arabinose(out) + H(+)(out) = D-arabinose(in) + H(+)(in). The catalysed reaction is L-galactose(out) + H(+)(out) = L-galactose(in) + H(+)(in). In terms of biological role, mediates the uptake of L-fucose across the boundary membrane with the concomitant transport of protons into the cell (symport system). Can also transport L-galactose and D-arabinose, but at reduced rates compared with L-fucose. Is not able to transport L-rhamnose and L-arabinose. Binds D-arabinose with the highest affinity, followed by L-fucose, and then by L-galactose. The chain is L-fucose-proton symporter (fucP) from Escherichia coli (strain K12).